Reading from the N-terminus, the 260-residue chain is UPF0294 protein plu0699 (260 aa).

Belongs to the UPF0294 family.

Its subcellular location is the cytoplasm. This is UPF0294 protein plu0699 from Photorhabdus laumondii subsp. laumondii (strain DSM 15139 / CIP 105565 / TT01) (Photorhabdus luminescens subsp. laumondii).